Here is a 265-residue protein sequence, read N- to C-terminus: Protein HesA, vegetative (265 aa).

The protein belongs to the HesA/MoeB/ThiF family.

In Trichormus variabilis (strain ATCC 29413 / PCC 7937) (Anabaena variabilis), this protein is Protein HesA, vegetative (hesA2).